The chain runs to 363 residues: 3-dehydroquinate synthase (363 aa).

Residues 109 to 113 (GATTD), 133 to 134 (TT), Lys146, and Lys155 contribute to the NAD(+) site. Zn(2+)-binding residues include Glu188, His251, and His267.

This sequence belongs to the sugar phosphate cyclases superfamily. Dehydroquinate synthase family. NAD(+) serves as cofactor. Co(2+) is required as a cofactor. Requires Zn(2+) as cofactor.

It is found in the cytoplasm. It carries out the reaction 7-phospho-2-dehydro-3-deoxy-D-arabino-heptonate = 3-dehydroquinate + phosphate. It participates in metabolic intermediate biosynthesis; chorismate biosynthesis; chorismate from D-erythrose 4-phosphate and phosphoenolpyruvate: step 2/7. Catalyzes the conversion of 3-deoxy-D-arabino-heptulosonate 7-phosphate (DAHP) to dehydroquinate (DHQ). This is 3-dehydroquinate synthase from Streptomyces avermitilis (strain ATCC 31267 / DSM 46492 / JCM 5070 / NBRC 14893 / NCIMB 12804 / NRRL 8165 / MA-4680).